We begin with the raw amino-acid sequence, 769 residues long: Integrin beta-8 (769 aa).

The N-terminal stretch at 1-42 (MCGSALAFFTAAFVCLQNDRRGPASFLWAAWVFSLVLGLGQG) is a signal peptide. Over 43–684 (EDNRCASSNA…ECFSSPSYLR (642 aa)) the chain is Extracellular. One can recognise a PSI domain in the interval 46-95 (RCASSNAASCARCLALGPECGWCVQEDFISGGSRSERCDIVSNLISKGCS). 25 disulfides stabilise this stretch: cysteine 47–cysteine 65, cysteine 55–cysteine 469, cysteine 58–cysteine 83, cysteine 68–cysteine 94, cysteine 211–cysteine 218, cysteine 266–cysteine 307, cysteine 407–cysteine 419, cysteine 439–cysteine 467, cysteine 471–cysteine 491, cysteine 471–cysteine 494, cysteine 481–cysteine 494, cysteine 499–cysteine 528, cysteine 511–cysteine 526, cysteine 520–cysteine 531, cysteine 533–cysteine 546, cysteine 553–cysteine 567, cysteine 561–cysteine 572, cysteine 574–cysteine 583, cysteine 585–cysteine 609, cysteine 593–cysteine 607, cysteine 601–cysteine 612, cysteine 614–cysteine 624, cysteine 627–cysteine 630, cysteine 634–cysteine 661, and cysteine 640–cysteine 657. Residues 146–384 (PVDLYYLVDV…NLVVEAYQKL (239 aa)) enclose the VWFA domain. Aspartate 154 and serine 156 together coordinate Mg(2+). Residue aspartate 193 participates in Ca(2+) binding. The N-linked (GlcNAc...) asparagine glycan is linked to asparagine 233. Ca(2+) contacts are provided by asparagine 249, aspartate 251, proline 253, and glutamate 254. Residue glutamate 254 coordinates Mg(2+). A glycan (N-linked (GlcNAc...) asparagine) is linked at asparagine 402. Asparagine 421, asparagine 431, asparagine 456, and asparagine 466 each carry an N-linked (GlcNAc...) asparagine glycan. 4 consecutive I-EGF domains span residues 471–495 (CEDN…FQCD), 499–547 (CHFD…KYCE), 548–584 (KDDF…DRCQ), and 585–625 (CPSA…RFCE). N-linked (GlcNAc...) asparagine glycosylation is present at asparagine 648. A helical transmembrane segment spans residues 685–704 (IFFIIFIVTFLIGLLKVLII). Residues 705–769 (RQVILQWNSN…NAHETFRCNF (65 aa)) are Cytoplasmic-facing.

It belongs to the integrin beta chain family. In terms of assembly, heterodimer of an alpha and a beta subunit. Beta-8 (ITGB8) associates with alpha-V (ITGAV) to form ITGAV:ITGB8. ITGAV:ITGB8 interacts with TGFB1. Placenta, kidney, brain, ovary, uterus and in several transformed cells. Transiently expressed in 293 human embryonic kidney cells.

Its subcellular location is the cell membrane. In terms of biological role, integrin alpha-V:beta-8 (ITGAV:ITGB8) is a receptor for fibronectin. It recognizes the sequence R-G-D in its ligands. Integrin alpha-V:beta-6 (ITGAV:ITGB6) mediates R-G-D-dependent release of transforming growth factor beta-1 (TGF-beta-1) from regulatory Latency-associated peptide (LAP), thereby playing a key role in TGF-beta-1 activation on the surface of activated regulatory T-cells (Tregs). Required during vasculogenesis. The protein is Integrin beta-8 of Homo sapiens (Human).